We begin with the raw amino-acid sequence, 243 residues long: Probable fructoselysine utilization operon transcriptional repressor (243 aa).

An HTH gntR-type domain is found at 10–78 (QLLYATVRQR…QGKGTFVQSQ (69 aa)). The segment at residues 38–57 (ENELCTQYNVSRITIRKAIS) is a DNA-binding region (H-T-H motif).

It participates in carbohydrate metabolism; fructoselysine degradation [regulation]. Its function is as follows. May regulate the transcription of the frlABCDR operon, involved in the utilization of fructoselysine and psicoselysine. This Shigella flexneri protein is Probable fructoselysine utilization operon transcriptional repressor (frlR).